A 207-amino-acid polypeptide reads, in one-letter code: Ribosomal RNA small subunit methyltransferase G (207 aa).

S-adenosyl-L-methionine-binding positions include glycine 75, leucine 80, 126–127 (VE), and arginine 141.

This sequence belongs to the methyltransferase superfamily. RNA methyltransferase RsmG family.

The protein resides in the cytoplasm. It catalyses the reaction guanosine(527) in 16S rRNA + S-adenosyl-L-methionine = N(7)-methylguanosine(527) in 16S rRNA + S-adenosyl-L-homocysteine. Specifically methylates the N7 position of guanine in position 527 of 16S rRNA. The polypeptide is Ribosomal RNA small subunit methyltransferase G (Psychromonas ingrahamii (strain DSM 17664 / CCUG 51855 / 37)).